Reading from the N-terminus, the 350-residue chain is Glycerol-1-phosphate dehydrogenase [NAD(P)+] (350 aa).

Residues 94–98 (GKPID) and 116–119 (TVAS) contribute to the NAD(+) site. D121 is a binding site for substrate. S125 provides a ligand contact to NAD(+). D168 serves as a coordination point for substrate. Positions 168 and 248 each coordinate Zn(2+). H252 serves as a coordination point for substrate. H264 serves as a coordination point for Zn(2+).

Belongs to the glycerol-1-phosphate dehydrogenase family. The cofactor is Zn(2+).

It localises to the cytoplasm. The enzyme catalyses sn-glycerol 1-phosphate + NAD(+) = dihydroxyacetone phosphate + NADH + H(+). The catalysed reaction is sn-glycerol 1-phosphate + NADP(+) = dihydroxyacetone phosphate + NADPH + H(+). It functions in the pathway membrane lipid metabolism; glycerophospholipid metabolism. Its function is as follows. Catalyzes the NAD(P)H-dependent reduction of dihydroxyacetonephosphate (DHAP or glycerone phosphate) to glycerol 1-phosphate (G1P). The G1P thus generated is used as the glycerophosphate backbone of phospholipids in the cellular membranes of Archaea. This chain is Glycerol-1-phosphate dehydrogenase [NAD(P)+], found in Halorubrum lacusprofundi (strain ATCC 49239 / DSM 5036 / JCM 8891 / ACAM 34).